The following is a 329-amino-acid chain: Transmembrane protein I329L (329 aa).

Residues 1-31 (MLRVFIFFVFLGSGLAGRIKPQITCKYFISE) form the signal peptide. N32, N39, N44, N76, N82, and N101 each carry an N-linked (GlcNAc...) asparagine; by host glycan. Residues 32-239 (NNTWYKYNVT…NTERYKNCYP (208 aa)) lie on the Extracellular side of the membrane. Residues 112-133 (ELKFLDLRYNNLQFIDYNILRK) form an LRR repeat. N-linked (GlcNAc...) asparagine; by host glycosylation is found at N185 and N219. C195 and C237 form a disulfide bridge. A helical membrane pass occupies residues 240 to 260 (FVLVSILCSCISFLFLIICLL). Residues 261–329 (RSICKKYSCT…EKKASCSRRK (69 aa)) are Cytoplasmic-facing.

Belongs to the asfivirus I329L family. Post-translationally, highly glycosylated.

It is found in the host endoplasmic reticulum membrane. Its subcellular location is the host Golgi apparatus membrane. Viral TLR3 homolog that probably prevents TLR3 dimerization and subsequent induction of IFN. Inhibits dsRNA-stimulated activation of NF-kB and IRF3. The chain is Transmembrane protein I329L from Ornithodoros (relapsing fever ticks).